Reading from the N-terminus, the 126-residue chain is MSGMGFLAVGVGAALGAWLRWALAILLNAVNPALPYGTLAANLVGGYLIGVAVGFFDTHAGLPPEWRLLVITGFLGGLTTFSTFSGEVVANILAGDHVIGVLHIVAHLGGSLFLTMLGFWTVRTFS.

The next 4 helical transmembrane spans lie at 6-26 (FLAV…LAIL), 36-56 (YGTL…VGFF), 69-89 (LVIT…GEVV), and 99-119 (IGVL…MLGF). Positions 76 and 79 each coordinate Na(+).

It belongs to the fluoride channel Fluc/FEX (TC 1.A.43) family.

It localises to the cell inner membrane. It catalyses the reaction fluoride(in) = fluoride(out). With respect to regulation, na(+) is not transported, but it plays an essential structural role and its presence is essential for fluoride channel function. Functionally, fluoride-specific ion channel. Important for reducing fluoride concentration in the cell, thus reducing its toxicity. This Ralstonia pickettii (strain 12J) protein is Fluoride-specific ion channel FluC.